A 122-amino-acid polypeptide reads, in one-letter code: Acidic phospholipase A2 CTs-A3 (122 aa).

7 disulfides stabilise this stretch: Cys26-Cys116, Cys28-Cys44, Cys43-Cys95, Cys49-Cys122, Cys50-Cys88, Cys57-Cys81, and Cys75-Cys86. Ca(2+) contacts are provided by Tyr27, Gly29, and Gly31. His47 is a catalytic residue. Asp48 is a binding site for Ca(2+). Residue Asp89 is part of the active site.

Requires Ca(2+) as cofactor. As to expression, expressed by the venom gland.

It is found in the secreted. It catalyses the reaction a 1,2-diacyl-sn-glycero-3-phosphocholine + H2O = a 1-acyl-sn-glycero-3-phosphocholine + a fatty acid + H(+). Functionally, snake venom phospholipase A2 (PLA2) that shows a moderate inhibition of ADP-induced human platelet aggregation when tested on platelet rich plasma. Exhibits moderate hydrolytic activities and prefers the anionic micelles (dPPC with deoxycholate) to the zwitterionic micelles (dPPC with Triton X-100). PLA2 catalyzes the calcium-dependent hydrolysis of the 2-acyl groups in 3-sn-phosphoglycerides. This chain is Acidic phospholipase A2 CTs-A3, found in Trimeresurus stejnegeri (Chinese green tree viper).